The primary structure comprises 590 residues: 2-isopropylmalate synthase (590 aa).

The Pyruvate carboxyltransferase domain occupies proline 40–aspartate 314. Mg(2+)-binding residues include aspartate 49, histidine 253, histidine 255, and asparagine 289. Residues alanine 456 to valine 590 are regulatory domain.

It belongs to the alpha-IPM synthase/homocitrate synthase family. LeuA type 2 subfamily. As to quaternary structure, homodimer. Mg(2+) is required as a cofactor.

Its subcellular location is the cytoplasm. It catalyses the reaction 3-methyl-2-oxobutanoate + acetyl-CoA + H2O = (2S)-2-isopropylmalate + CoA + H(+). The protein operates within amino-acid biosynthesis; L-leucine biosynthesis; L-leucine from 3-methyl-2-oxobutanoate: step 1/4. Its function is as follows. Catalyzes the condensation of the acetyl group of acetyl-CoA with 3-methyl-2-oxobutanoate (2-ketoisovalerate) to form 3-carboxy-3-hydroxy-4-methylpentanoate (2-isopropylmalate). The polypeptide is 2-isopropylmalate synthase (Leifsonia xyli subsp. xyli (strain CTCB07)).